The primary structure comprises 164 residues: MNPRRQKRLIVISAIVLVIGAAIGLMLYALSQNIDLFYTPSEVIDGKQIGQVTEVPQVGQRLRIGGMVVPGSVKRDNESLAVSFDLIDTGPIVTVSYQGLLPDLFREGQGIVATGVLTAENHIEAHEVLAKHDEEYMPPELAEKMKGIKHVKPEQAYSTPKVSG.

At 1–8 the chain is on the cytoplasmic side; that stretch reads MNPRRQKR. The helical; Signal-anchor for type II membrane protein transmembrane segment at 9–29 threads the bilayer; that stretch reads LIVISAIVLVIGAAIGLMLYA. Residues 30–164 are Periplasmic-facing; it reads LSQNIDLFYT…QAYSTPKVSG (135 aa). 2 residues coordinate heme: His132 and Tyr136.

Belongs to the CcmE/CycJ family.

It is found in the cell inner membrane. Heme chaperone required for the biogenesis of c-type cytochromes. Transiently binds heme delivered by CcmC and transfers the heme to apo-cytochromes in a process facilitated by CcmF and CcmH. The chain is Cytochrome c-type biogenesis protein CcmE from Pseudoalteromonas atlantica (strain T6c / ATCC BAA-1087).